The sequence spans 247 residues: Coproheme decarboxylase (247 aa).

Residues Arg129, 143–147 (YPMDK), His170, Gln183, and Ser221 each bind Fe-coproporphyrin III. Residue Tyr143 is part of the active site.

It belongs to the ChdC family. Type 1 subfamily. Fe-coproporphyrin III serves as cofactor.

The enzyme catalyses Fe-coproporphyrin III + 2 H2O2 + 2 H(+) = heme b + 2 CO2 + 4 H2O. The catalysed reaction is Fe-coproporphyrin III + H2O2 + H(+) = harderoheme III + CO2 + 2 H2O. It catalyses the reaction harderoheme III + H2O2 + H(+) = heme b + CO2 + 2 H2O. Its pathway is porphyrin-containing compound metabolism; protoheme biosynthesis. Its function is as follows. Involved in coproporphyrin-dependent heme b biosynthesis. Catalyzes the decarboxylation of Fe-coproporphyrin III (coproheme) to heme b (protoheme IX), the last step of the pathway. The reaction occurs in a stepwise manner with a three-propionate intermediate. The sequence is that of Coproheme decarboxylase from Bacillus mycoides (strain KBAB4) (Bacillus weihenstephanensis).